Consider the following 445-residue polypeptide: Putative ubiquitin carboxyl-terminal hydrolase L293 (445 aa).

A USP domain is found at lysine 133–isoleucine 441. Cysteine 142 serves as the catalytic Nucleophile. The active-site Proton acceptor is histidine 384.

It belongs to the peptidase C19 family.

The protein resides in the virion. The catalysed reaction is Thiol-dependent hydrolysis of ester, thioester, amide, peptide and isopeptide bonds formed by the C-terminal Gly of ubiquitin (a 76-residue protein attached to proteins as an intracellular targeting signal).. This is Putative ubiquitin carboxyl-terminal hydrolase L293 from Acanthamoeba polyphaga mimivirus (APMV).